The sequence spans 514 residues: ATP synthase subunit alpha (514 aa).

170-177 (GDRQIGKT) provides a ligand contact to ATP.

It belongs to the ATPase alpha/beta chains family. In terms of assembly, F-type ATPases have 2 components, CF(1) - the catalytic core - and CF(0) - the membrane proton channel. CF(1) has five subunits: alpha(3), beta(3), gamma(1), delta(1), epsilon(1). CF(0) has three main subunits: a(1), b(2) and c(9-12). The alpha and beta chains form an alternating ring which encloses part of the gamma chain. CF(1) is attached to CF(0) by a central stalk formed by the gamma and epsilon chains, while a peripheral stalk is formed by the delta and b chains.

Its subcellular location is the cell inner membrane. The catalysed reaction is ATP + H2O + 4 H(+)(in) = ADP + phosphate + 5 H(+)(out). Its function is as follows. Produces ATP from ADP in the presence of a proton gradient across the membrane. The alpha chain is a regulatory subunit. The sequence is that of ATP synthase subunit alpha from Pseudomonas entomophila (strain L48).